Reading from the N-terminus, the 242-residue chain is MNDWLFDLGNSRFKCASLREGVIGPVTVLPYLTETMDAFALQELPRGRVAYLASVAAPAITTHVLEVLKIHFEKVQVAATVAACAGVRIAYAHPERFGVDRFLALLGSYGEGNVLVVGVGTALTIDLLAANGCHLGGRISASPTLMRQALHARAEQLPLSGGNYLEFAEDTEDALVSGCNGAAVALIERSLYEAHQRLDQSVRLLLHGGGVASLLPWLGDVVHRPKLVLDGLAIWAAVAANV.

7–14 is a binding site for ATP; that stretch reads DLGNSRFK. Substrate-binding positions include tyrosine 91 and 98–101; that span reads GVDR. Residue aspartate 100 is the Proton acceptor of the active site. Position 121 (threonine 121) interacts with ATP. Threonine 171 contributes to the substrate binding site.

This sequence belongs to the type III pantothenate kinase family. Homodimer. NH4(+) is required as a cofactor. The cofactor is K(+).

Its subcellular location is the cytoplasm. It catalyses the reaction (R)-pantothenate + ATP = (R)-4'-phosphopantothenate + ADP + H(+). It functions in the pathway cofactor biosynthesis; coenzyme A biosynthesis; CoA from (R)-pantothenate: step 1/5. In terms of biological role, catalyzes the phosphorylation of pantothenate (Pan), the first step in CoA biosynthesis. The chain is Type III pantothenate kinase from Xylella fastidiosa (strain M23).